The following is a 150-amino-acid chain: Cytochrome c oxidase subunit 5A, mitochondrial (150 aa).

The transit peptide at 1-41 (MLGAALRRCAVAATTRADPRGLLHSARTPGPAVAIQSVRCY) directs the protein to the mitochondrion. Positions 2 to 17 (LGAALRRCAVAATTRA) match the SIFI-degron motif. K87 and K113 each carry N6-acetyllysine. A Phosphothreonine modification is found at T141.

Belongs to the cytochrome c oxidase subunit 5A family. As to quaternary structure, component of the cytochrome c oxidase (complex IV, CIV), a multisubunit enzyme composed of 14 subunits. The complex is composed of a catalytic core of 3 subunits MT-CO1, MT-CO2 and MT-CO3, encoded in the mitochondrial DNA, and 11 supernumerary subunits COX4I1 (or COX4I2), COX5A, COX5B, COX6A1 (or COX6A2), COX6B1 (or COX6B2), COX6C, COX7A2 (or COX7A1), COX7B, COX7C, COX8A and NDUFA4, which are encoded in the nuclear genome. The complex exists as a monomer or a dimer and forms supercomplexes (SCs) in the inner mitochondrial membrane with NADH-ubiquinone oxidoreductase (complex I, CI) and ubiquinol-cytochrome c oxidoreductase (cytochrome b-c1 complex, complex III, CIII), resulting in different assemblies (supercomplex SCI(1)III(2)IV(1) and megacomplex MCI(2)III(2)IV(2)). Interacts with AFG1L. Interacts with RAB5IF. In response to mitochondrial stress, the precursor protein is ubiquitinated by the SIFI complex in the cytoplasm before mitochondrial import, leading to its degradation. Within the SIFI complex, UBR4 initiates ubiquitin chain that are further elongated or branched by KCMF1.

The protein localises to the mitochondrion inner membrane. The protein operates within energy metabolism; oxidative phosphorylation. Functionally, component of the cytochrome c oxidase, the last enzyme in the mitochondrial electron transport chain which drives oxidative phosphorylation. The respiratory chain contains 3 multisubunit complexes succinate dehydrogenase (complex II, CII), ubiquinol-cytochrome c oxidoreductase (cytochrome b-c1 complex, complex III, CIII) and cytochrome c oxidase (complex IV, CIV), that cooperate to transfer electrons derived from NADH and succinate to molecular oxygen, creating an electrochemical gradient over the inner membrane that drives transmembrane transport and the ATP synthase. Cytochrome c oxidase is the component of the respiratory chain that catalyzes the reduction of oxygen to water. Electrons originating from reduced cytochrome c in the intermembrane space (IMS) are transferred via the dinuclear copper A center (CU(A)) of subunit 2 and heme A of subunit 1 to the active site in subunit 1, a binuclear center (BNC) formed by heme A3 and copper B (CU(B)). The BNC reduces molecular oxygen to 2 water molecules using 4 electrons from cytochrome c in the IMS and 4 protons from the mitochondrial matrix. The polypeptide is Cytochrome c oxidase subunit 5A, mitochondrial (COX5A) (Homo sapiens (Human)).